Here is an 85-residue protein sequence, read N- to C-terminus: Large ribosomal subunit protein bL27 (85 aa).

Residues Met-1–Gly-22 are disordered.

The protein belongs to the bacterial ribosomal protein bL27 family.

This Anaeromyxobacter dehalogenans (strain 2CP-1 / ATCC BAA-258) protein is Large ribosomal subunit protein bL27.